The chain runs to 838 residues: Leucine--tRNA ligase 1 (838 aa).

The short motif at 40 to 51 is the 'HIGH' region element; that stretch reads PYPSGAGLHVGH. Positions 608–612 match the 'KMSKS' region motif; sequence KMSKS. ATP is bound at residue lysine 611.

Belongs to the class-I aminoacyl-tRNA synthetase family.

Its subcellular location is the cytoplasm. It catalyses the reaction tRNA(Leu) + L-leucine + ATP = L-leucyl-tRNA(Leu) + AMP + diphosphate. The sequence is that of Leucine--tRNA ligase 1 from Rhizobium johnstonii (strain DSM 114642 / LMG 32736 / 3841) (Rhizobium leguminosarum bv. viciae).